Consider the following 348-residue polypeptide: Protein RecA (348 aa).

66–73 is a binding site for ATP; sequence GPESSGKT.

The protein belongs to the RecA family.

It localises to the cytoplasm. Functionally, can catalyze the hydrolysis of ATP in the presence of single-stranded DNA, the ATP-dependent uptake of single-stranded DNA by duplex DNA, and the ATP-dependent hybridization of homologous single-stranded DNAs. It interacts with LexA causing its activation and leading to its autocatalytic cleavage. The sequence is that of Protein RecA from Burkholderia lata (strain ATCC 17760 / DSM 23089 / LMG 22485 / NCIMB 9086 / R18194 / 383).